Here is a 600-residue protein sequence, read N- to C-terminus: Dihydroxy-acid dehydratase (600 aa).

Asp-82 is a Mg(2+) binding site. Residue Cys-123 participates in [2Fe-2S] cluster binding. Mg(2+) is bound by residues Asp-124 and Lys-125. Lys-125 bears the N6-carboxylysine mark. Cys-192 contributes to the [2Fe-2S] cluster binding site. Glu-489 provides a ligand contact to Mg(2+). Ser-515 acts as the Proton acceptor in catalysis.

This sequence belongs to the IlvD/Edd family. As to quaternary structure, homodimer. [2Fe-2S] cluster is required as a cofactor. It depends on Mg(2+) as a cofactor.

The enzyme catalyses (2R)-2,3-dihydroxy-3-methylbutanoate = 3-methyl-2-oxobutanoate + H2O. The catalysed reaction is (2R,3R)-2,3-dihydroxy-3-methylpentanoate = (S)-3-methyl-2-oxopentanoate + H2O. It participates in amino-acid biosynthesis; L-isoleucine biosynthesis; L-isoleucine from 2-oxobutanoate: step 3/4. The protein operates within amino-acid biosynthesis; L-valine biosynthesis; L-valine from pyruvate: step 3/4. In terms of biological role, functions in the biosynthesis of branched-chain amino acids. Catalyzes the dehydration of (2R,3R)-2,3-dihydroxy-3-methylpentanoate (2,3-dihydroxy-3-methylvalerate) into 2-oxo-3-methylpentanoate (2-oxo-3-methylvalerate) and of (2R)-2,3-dihydroxy-3-methylbutanoate (2,3-dihydroxyisovalerate) into 2-oxo-3-methylbutanoate (2-oxoisovalerate), the penultimate precursor to L-isoleucine and L-valine, respectively. The chain is Dihydroxy-acid dehydratase from Bacteroides thetaiotaomicron (strain ATCC 29148 / DSM 2079 / JCM 5827 / CCUG 10774 / NCTC 10582 / VPI-5482 / E50).